The chain runs to 173 residues: Archaemetzincin (173 aa).

His130 serves as a coordination point for Zn(2+). The active-site Proton acceptor is the Glu131. Zn(2+) is bound by residues His134, His140, Cys141, Cys146, Cys165, and Cys168.

It belongs to the peptidase M54 family. Monomer. Requires Zn(2+) as cofactor.

Probable zinc metalloprotease whose natural substrate is unknown. In Natronomonas pharaonis (strain ATCC 35678 / DSM 2160 / CIP 103997 / JCM 8858 / NBRC 14720 / NCIMB 2260 / Gabara) (Halobacterium pharaonis), this protein is Archaemetzincin.